A 129-amino-acid chain; its full sequence is Phosphoribosyl-AMP cyclohydrolase (129 aa).

Aspartate 94 is a Mg(2+) binding site. Cysteine 95 provides a ligand contact to Zn(2+). Mg(2+) contacts are provided by aspartate 96 and aspartate 98. Positions 111 and 118 each coordinate Zn(2+).

The protein belongs to the PRA-CH family. Homodimer. Mg(2+) serves as cofactor. The cofactor is Zn(2+).

Its subcellular location is the cytoplasm. It carries out the reaction 1-(5-phospho-beta-D-ribosyl)-5'-AMP + H2O = 1-(5-phospho-beta-D-ribosyl)-5-[(5-phospho-beta-D-ribosylamino)methylideneamino]imidazole-4-carboxamide. It participates in amino-acid biosynthesis; L-histidine biosynthesis; L-histidine from 5-phospho-alpha-D-ribose 1-diphosphate: step 3/9. Catalyzes the hydrolysis of the adenine ring of phosphoribosyl-AMP. The sequence is that of Phosphoribosyl-AMP cyclohydrolase from Corynebacterium efficiens (strain DSM 44549 / YS-314 / AJ 12310 / JCM 11189 / NBRC 100395).